The following is a 236-amino-acid chain: Thiamine import ATP-binding protein ThiQ (236 aa).

The region spanning 2 to 230 (LKLEKITYLY…SAAKASVLGI (229 aa)) is the ABC transporter domain. An ATP-binding site is contributed by 32–39 (GPSGAGKS).

It belongs to the ABC transporter superfamily. Thiamine importer (TC 3.A.1.19.1) family. The complex is composed of two ATP-binding proteins (ThiQ), two transmembrane proteins (ThiP) and a solute-binding protein (ThiB).

The protein localises to the cell inner membrane. The enzyme catalyses thiamine(out) + ATP + H2O = thiamine(in) + ADP + phosphate + H(+). Functionally, part of the ABC transporter complex ThiBPQ involved in thiamine import. Responsible for energy coupling to the transport system. This chain is Thiamine import ATP-binding protein ThiQ, found in Yersinia pseudotuberculosis serotype I (strain IP32953).